A 461-amino-acid polypeptide reads, in one-letter code: Cyclic 2,3-diphosphoglycerate synthetase (461 aa).

The protein belongs to the cyclic 2,3-diphosphoglycerate synthetase family.

It localises to the cytoplasm. It carries out the reaction (2R)-2,3-bisphosphoglycerate + ATP + H(+) = cyclic (2R)-2,3-bisphosphoglycerate + ADP + phosphate. Catalyzes the formation of cyclic 2,3-diphosphoglycerate (cDPG) by formation of an intramolecular phosphoanhydride bond at the expense of ATP. This is Cyclic 2,3-diphosphoglycerate synthetase from Methanosphaera stadtmanae (strain ATCC 43021 / DSM 3091 / JCM 11832 / MCB-3).